The following is a 156-amino-acid chain: Transcription elongation factor GreA 1 (156 aa).

The stretch at 43–74 (RSENAEYSSAKRDLGRLESRLRYLNKQLQYAQ) forms a coiled coil.

This sequence belongs to the GreA/GreB family.

Its function is as follows. Necessary for efficient RNA polymerase transcription elongation past template-encoded arresting sites. The arresting sites in DNA have the property of trapping a certain fraction of elongating RNA polymerases that pass through, resulting in locked ternary complexes. Cleavage of the nascent transcript by cleavage factors such as GreA or GreB allows the resumption of elongation from the new 3'terminus. GreA releases sequences of 2 to 3 nucleotides. The polypeptide is Transcription elongation factor GreA 1 (Lactiplantibacillus plantarum (strain ATCC BAA-793 / NCIMB 8826 / WCFS1) (Lactobacillus plantarum)).